A 190-amino-acid chain; its full sequence is dCTP deaminase, dUMP-forming (190 aa).

Residues 101–106, aspartate 119, 127–129, glutamine 148, tyrosine 162, and glutamine 174 contribute to the dCTP site; these read KSSLGR and TLE. The Proton donor/acceptor role is filled by glutamate 129. The tract at residues 162–184 is disordered; the sequence is YGSAKVGSKYQGQRGPTPSRSYQ. Polar residues predominate over residues 171 to 184; that stretch reads YQGQRGPTPSRSYQ.

It belongs to the dCTP deaminase family. As to quaternary structure, homotrimer.

It catalyses the reaction dCTP + 2 H2O = dUMP + NH4(+) + diphosphate. It participates in pyrimidine metabolism; dUMP biosynthesis; dUMP from dCTP: step 1/1. Functionally, bifunctional enzyme that catalyzes both the deamination of dCTP to dUTP and the hydrolysis of dUTP to dUMP without releasing the toxic dUTP intermediate. The protein is dCTP deaminase, dUMP-forming of Mycobacterium sp. (strain JLS).